A 465-amino-acid polypeptide reads, in one-letter code: MDVLKITGGIPLKGQVKAAGAKNAMTKLLVASLLSDKKCTFYNVPNIGDVEVTVSLCQEIGMEVRWDRAAGIMEVITKELKTSYIPQRFSGSNRIPILMIGALLGRTDQDIIVPTAGGCPIGQRPVDFHIQALEQLGAVIEYRGMKREGAYFAHAHNGLKGTLITLPYPSVGATENTILAGITARGVTVIKNAAIEPEIVELILFLQKLGAIITIDVDRTIRIQGTRRFYEVEHTVIPDRIEAASWGMAAISSKGKVFVEGAQHLNMITFLNKLREVGGGFDVRSNGIEFFYDGPLQGGLHLETDVHPGFMTDWQQPFVVLLTQSSGTSVVHETVYENRFGYTDTLKEMGADITPFRQCLGGKSCRFASQSFSHSAIIKGATPLVGKEIRIPDLRAGFAYIMAALIANDTSTISGLPFIQRGYENFIGKLADLGANVSLVEEEKNVKEMPENSSKLPLFAELQVN.

Position 22 to 23 (22 to 23) interacts with phosphoenolpyruvate; it reads KN. Arg94 contacts UDP-N-acetyl-alpha-D-glucosamine. Cys119 acts as the Proton donor in catalysis. Cys119 carries the 2-(S-cysteinyl)pyruvic acid O-phosphothioketal modification. UDP-N-acetyl-alpha-D-glucosamine-binding residues include Asp313 and Val335.

This sequence belongs to the EPSP synthase family. MurA subfamily.

It localises to the cytoplasm. It catalyses the reaction phosphoenolpyruvate + UDP-N-acetyl-alpha-D-glucosamine = UDP-N-acetyl-3-O-(1-carboxyvinyl)-alpha-D-glucosamine + phosphate. Its pathway is cell wall biogenesis; peptidoglycan biosynthesis. In terms of biological role, cell wall formation. Adds enolpyruvyl to UDP-N-acetylglucosamine. The protein is UDP-N-acetylglucosamine 1-carboxyvinyltransferase of Protochlamydia amoebophila (strain UWE25).